Here is a 401-residue protein sequence, read N- to C-terminus: Chalcone synthase 2 (401 aa).

The active site involves cysteine 168.

The protein belongs to the thiolase-like superfamily. Chalcone/stilbene synthases family.

The catalysed reaction is (E)-4-coumaroyl-CoA + 3 malonyl-CoA + 3 H(+) = 2',4,4',6'-tetrahydroxychalcone + 3 CO2 + 4 CoA. The protein operates within secondary metabolite biosynthesis; flavonoid biosynthesis. In terms of biological role, the primary product of this enzyme is 4,2',4',6'-tetrahydroxychalcone (also termed naringenin-chalcone or chalcone) which can under specific conditions spontaneously isomerize into naringenin. In Sorghum bicolor (Sorghum), this protein is Chalcone synthase 2 (CHS2).